Consider the following 89-residue polypeptide: MLMEDGGLDTTSEEYRKLSKAERRKRRRATPKYRNLHATRERIRVESFNMAFSQLRALLPTLPVEKKLSKIEILRFSIAYISFLDNLLQ.

Residues 1 to 32 (MLMEDGGLDTTSEEYRKLSKAERRKRRRATPK) form a disordered region. The span at 22–32 (ERRKRRRATPK) shows a compositional bias: basic residues. The segment at 32–45 (KYRNLHATRERIRV) is basic motif. The 53-residue stretch at 32–84 (KYRNLHATRERIRVESFNMAFSQLRALLPTLPVEKKLSKIEILRFSIAYISFL) folds into the bHLH domain. The tract at residues 46–84 (ESFNMAFSQLRALLPTLPVEKKLSKIEILRFSIAYISFL) is helix-loop-helix motif.

In terms of tissue distribution, expressed in sensory head neurons of the lateral ganglion.

Its subcellular location is the nucleus. Its function is as follows. Transcription factor which binds the E box motif 5'-CA[TC][AG]TG-3'. Involved in modulating physiological aging, probably by regulating expression of branched-chain amino acid transferase-1, bcat-1. In Caenorhabditis elegans, this protein is Helix-loop-helix protein 15.